Reading from the N-terminus, the 61-residue chain is Arabinogalactan protein 15 (61 aa).

Positions 1–22 (MAISKASIVVLMMVIISVVASA) are cleaved as a signal peptide. Gln-23 is modified (pyrrolidone carboxylic acid). Residues Pro-27, Pro-29, and Pro-31 each carry the 4-hydroxyproline modification. Pro-27, Pro-29, and Pro-31 each carry an O-linked (Ara...) hydroxyproline glycan. Ser-35 carries the GPI-anchor amidated serine lipid modification. The propeptide at 36 to 61 (SAISASFVSAGVAAVAALVFGSALRI) is removed in mature form.

Belongs to the AG-peptide AGP family. In terms of processing, contains 4-hydroxyproline; hydroxylated on Pro-27, Pro-29 and Pro-31. O-glycosylated on hydroxyprolines; noncontiguous hydroxylproline residues are glycosylated with arabinogalactan. Expressed in reproductive tissues. Expressed in chalaza, funiculus, stigma, septum, style, integument and transmitting tract.

The protein resides in the cell membrane. In terms of biological role, proteoglycan that seems to be implicated in diverse developmental roles such as differentiation, cell-cell recognition, embryogenesis and programmed cell death. The protein is Arabinogalactan protein 15 of Arabidopsis thaliana (Mouse-ear cress).